Consider the following 358-residue polypeptide: Peptide chain release factor 1 (358 aa).

An N5-methylglutamine modification is found at Q232.

This sequence belongs to the prokaryotic/mitochondrial release factor family. Post-translationally, methylated by PrmC. Methylation increases the termination efficiency of RF1.

It is found in the cytoplasm. Functionally, peptide chain release factor 1 directs the termination of translation in response to the peptide chain termination codons UAG and UAA. The sequence is that of Peptide chain release factor 1 from Acidobacterium capsulatum (strain ATCC 51196 / DSM 11244 / BCRC 80197 / JCM 7670 / NBRC 15755 / NCIMB 13165 / 161).